We begin with the raw amino-acid sequence, 261 residues long: Indole-3-glycerol phosphate synthase (261 aa).

This sequence belongs to the TrpC family.

The enzyme catalyses 1-(2-carboxyphenylamino)-1-deoxy-D-ribulose 5-phosphate + H(+) = (1S,2R)-1-C-(indol-3-yl)glycerol 3-phosphate + CO2 + H2O. Its pathway is amino-acid biosynthesis; L-tryptophan biosynthesis; L-tryptophan from chorismate: step 4/5. The protein is Indole-3-glycerol phosphate synthase of Burkholderia pseudomallei (strain 1106a).